The chain runs to 575 residues: Inactive terpenoid synthase 20, chloroplastic (575 aa).

A chloroplast-targeting transit peptide spans methionine 1–asparagine 52. 5 residues coordinate Mg(2+): aspartate 332, aspartate 336, aspartate 474, threonine 478, and glutamate 482. The DDXXD motif motif lies at aspartate 332–aspartate 336.

It belongs to the terpene synthase family. Tpsa subfamily. As to expression, predominantly expressed in roots but also in leaves and stems.

The protein localises to the plastid. It is found in the chloroplast. In terms of biological role, does not possess diterpene synthase activity. This chain is Inactive terpenoid synthase 20, chloroplastic, found in Arabidopsis thaliana (Mouse-ear cress).